The following is a 781-amino-acid chain: Catenin beta-1 (781 aa).

Alanine 2 carries the post-translational modification N-acetylalanine. Residues 2 to 23 (ATQADLMELDMAMEPDRKAAVS) form an interaction with VCL region. Serine 23 is subject to Phosphoserine; by GSK3-beta; alternate. Serine 23 carries O-linked (GlcNAc) serine; alternate glycosylation. Phosphoserine; by GSK3-beta is present on serine 29. Phosphoserine; by GSK3-beta and HIPK2 occurs at positions 33 and 37. Residues 34 to 57 (GIHSGATTTAPSLSGKGNPEEEDV) are disordered. Phosphothreonine; by GSK3-beta is present on threonine 41. Phosphoserine is present on serine 45. An N6-acetyllysine modification is found at lysine 49. Tyrosine 64 carries the phosphotyrosine; by PTK6 modification. Tyrosine 142 is subject to Phosphotyrosine; by FYN and PTK6. 12 ARM repeats span residues 151–191 (RAIP…IMRS), 193–234 (QMVS…IFKS), 235–276 (GGIP…VRLA), 277–318 (GGLQ…ILAS), 319–360 (GGPQ…IVEA), 361–389 (GGMQALGLHLTDPSQRLVQNCLWTLRNLS), 400–441 (GLLG…VCQV), 442–484 (GGIE…AQNA), 489–530 (YGLP…LREQ), 531–571 (GAIP…EIVE), 594–636 (NTIP…AEGA), and 637–666 (TAPLTELLHSRNEGVATYAAAVLFRMSEDK). Positions 156–178 (LTKLLNDEDQVVVNKAAVMVHQL) are interaction with BCL9. A Phosphoserine modification is found at serine 191. The residue at position 246 (serine 246) is a Phosphoserine; by CDK5. 2 positions are modified to phosphotyrosine: tyrosine 331 and tyrosine 333. Serine 552 carries the phosphoserine; by AMPK modification. A Phosphothreonine modification is found at threonine 556. At cysteine 619 the chain carries S-nitrosocysteine. Serine 675 bears the Phosphoserine mark. The disordered stretch occupies residues 720–781 (HSGGYGQDAL…NQLAWFDTDL (62 aa)). Over residues 734–745 (MMEHEMGGHHPG) the composition is skewed to basic and acidic residues. Positions 772–781 (NQLAWFDTDL) are interaction with SCRIB.

Belongs to the beta-catenin family. Two separate complex-associated pools are found in the cytoplasm. The majority is present as component of an E-cadherin/ catenin adhesion complex composed of at least E-cadherin/CDH1 and beta-catenin/CTNNB1, and possibly alpha-catenin/CTNNA1; the complex is located to adherens junctions. The stable association of CTNNA1 is controversial as CTNNA1 was shown not to bind to F-actin when assembled in the complex. Alternatively, the CTNNA1-containing complex may be linked to F-actin by other proteins such as LIMA1. Binds NHERF1. Interacts with PTPRU (via the cytoplasmic juxtamembrane domain) and with EMD. Interacts with SESTD1 and TRPC4. Interacts with CAV1. Interacts with PTPRJ. Interacts with PKT7. Interacts with FAT1 (via the cytoplasmic domain). Interacts with CDK2, NDRG2 and NANOS1. Interacts with NEK2 and CDK5. Interacts with CARM1, CXADR, PCDH11Y and PTK6. Interacts with RAPGEF2. Interacts with SOX7; this interaction may lead to proteasomal degradation of active CTNNB1 and thus inhibition of Wnt/beta-catenin-stimulated transcription. Identified in a complex with HINT1 and MITF. Interacts with FHIT. Interacts with FERMT2. Identified in a complex with TCF4 and FERMT2. Another cytoplasmic pool is part of a large complex containing AXIN1, AXIN2, APC, CSNK1A1 and GSK3B that promotes phosphorylation on N-terminal Ser and Thr residues and ubiquitination of CTNNB1 via BTRC and its subsequent degradation by the proteasome. Wnt-dependent activation of DVL antagonizes the action of GSK3B. When GSK3B activity is inhibited the complex dissociates, CTNNB1 is dephosphorylated and is no longer targeted for destruction. The stabilized protein translocates to the nucleus, where it binds TCF/LEF-1 family members, BCL9, BCL9L and possibly also RUVBL1 and CHD8. Interacts with TAX1BP3 (via the PDZ domain); this interaction inhibits the transcriptional activity of CTNNB1. Interacts with AJAP1, BAIAP1 and CTNNA3. Interacts with TRPV4; the TRPV4 and CTNNB1 complex can interact with CDH1. Interacts with VCL. The CTNNB1 and TCF4 complex interacts with PML. Interacts with XIRP1. Binds CTNNBIP and EP300. CTNNB1 forms a ternary complex with LEF1 and EP300 that is disrupted by CTNNBIP1 binding. Interacts directly with AXIN1; the interaction is regulated by CDK2 phosphorylation of AXIN1. Interacts with GLIS2. Interacts with SCRIB. Interacts with TNIK and TCF7L2. Interacts with SLC30A9. Interacts with RORA. May interact with P-cadherin/CDH3. Interacts with RNF220. Interacts with CTNND2. Interacts (via the C-terminal region) with CBY1. The complex composed, at least, of APC, CTNNB1 and GSK3B interacts with JPT1; the interaction requires the inactive form of GSK3B (phosphorylated at 'Ser-9'). Interacts with DLG5. Interacts with FAM53B; promoting translocation to the nucleus. Interacts with TMEM170B. Interacts with AHI1. Interacts with GID8. Component of an cadherin:catenin adhesion complex composed of at least of CDH26, beta-catenin/CTNNB1, alpha-catenin/CTNNA1 and p120 catenin/CTNND1. Forms a complex comprising APPL1, RUVBL2, APPL2, HDAC1 and HDAC2. Interacts with IRF2BPL; mediates the ubiquitination and degradation of CTNNB1. Interacts with AMFR. Interacts with LMBR1L. Interacts with SOX30; prevents interaction of CTNNB1 with TCF7L2/TCF4 and leads to inhibition of Wnt signaling. Interacts with SOX9; inhibiting CTNNB1 activity by competing with the binding sites of TCF/LEF within CTNNB1, thereby inhibiting the Wnt signaling. Interacts with SPN/CD43 cytoplasmic tail. Interacts (when phosphorylated at Tyr-333) with isoform M2 of PKM (PKM2); promoting transcription activation. Interacts with PKP2 (via HEAD domain). Interacts with CDH1. Interacts (when unphosphorylated) with FLYWCH1, perhaps preventing interaction of CTNNB1 with TCF4, and thereby regulating transcription activation; phosphorylation of CTNNB1 may inhibit the interaction. Interacts (via the central armadillo domains) with probable transcriptional regulator ADNP (via N-terminal region); interaction is direct and stabilizes CTNNB1 by modulating its phosphorylation by glycogen synthase kinase-3 beta GSK3B. Interacts with NR5A2. Interacts with DSG2; the interaction promotes localization of CTNNB1 at cell junctions thus reducing its nuclear localization and subsequent transcription of CTNNB1/TCF-target genes. Phosphorylation at Ser-552 by AMPK promotes stabilization of the protein, enhancing TCF/LEF-mediated transcription. Phosphorylation by GSK3B requires prior phosphorylation of Ser-45 by another kinase. Phosphorylation proceeds then from Thr-41 to Ser-37 and Ser-33. Phosphorylated by NEK2. EGF stimulates tyrosine phosphorylation. Phosphorylated on Ser-33 and Ser-37 by HIPK2 and GSK3B, this phosphorylation triggers proteasomal degradation. Phosphorylation on Ser-191 and Ser-246 by CDK5. Phosphorylation by CDK2 regulates insulin internalization. Phosphorylation by PTK6 at Tyr-64, Tyr-142, Tyr-331 and/or Tyr-333 with the predominant site at Tyr-64 is not essential for inhibition of transcriptional activity. Phosphorylation by SRC at Tyr-333 promotes interaction with isoform M2 of PKM (PKM2); promoting transcription activation. Post-translationally, ubiquitinated by the SCF(BTRC) E3 ligase complex when phosphorylated by GSK3B, leading to its degradation. Ubiquitinated by a E3 ubiquitin ligase complex containing UBE2D1, SIAH1, CACYBP/SIP, SKP1, APC and TBL1X, leading to its subsequent proteasomal degradation. Ubiquitinated and degraded following interaction with SOX9. Ubiquitinated via 'Lys-11'- and 'Lys-29'-linked ubiquitin chains by UBR5, leading to its stabilization. In terms of processing, S-nitrosylation at Cys-619 within adherens junctions promotes VEGF-induced, NO-dependent endothelial cell permeability by disrupting interaction with E-cadherin, thus mediating disassembly adherens junctions. O-glycosylation at Ser-23 decreases nuclear localization and transcriptional activity, and increases localization to the plasma membrane and interaction with E-cadherin CDH1. Post-translationally, deacetylated at Lys-49 by SIRT1. Expressed in cerebellar granule neurons (at protein level). Expressed in the intestinal epithelium (at protein level). Abundantly expressed in the tooth, skin, lung, kidney, eye and brain with weak expression in the liver and heart.

It localises to the cytoplasm. Its subcellular location is the nucleus. It is found in the cytoskeleton. The protein resides in the cell junction. The protein localises to the adherens junction. It localises to the cell membrane. Its subcellular location is the microtubule organizing center. It is found in the centrosome. The protein resides in the spindle pole. The protein localises to the synapse. It localises to the cilium basal body. Its function is as follows. Key downstream component of the canonical Wnt signaling pathway. In the absence of Wnt, forms a complex with AXIN1, AXIN2, APC, CSNK1A1 and GSK3B that promotes phosphorylation on N-terminal Ser and Thr residues and ubiquitination of CTNNB1 via BTRC and its subsequent degradation by the proteasome. In the presence of Wnt ligand, CTNNB1 is not ubiquitinated and accumulates in the nucleus, where it acts as a coactivator for transcription factors of the TCF/LEF family, leading to activate Wnt responsive genes. Also acts as a coactivator for other transcription factors, such as NR5A2. Promotes epithelial to mesenchymal transition/mesenchymal to epithelial transition (EMT/MET) via driving transcription of CTNNB1/TCF-target genes. Involved in the regulation of cell adhesion, as component of an E-cadherin:catenin adhesion complex. Acts as a negative regulator of centrosome cohesion. Involved in the CDK2/PTPN6/CTNNB1/CEACAM1 pathway of insulin internalization. Blocks anoikis of malignant kidney and intestinal epithelial cells and promotes their anchorage-independent growth by down-regulating DAPK2. Disrupts PML function and PML-NB formation by inhibiting RANBP2-mediated sumoylation of PML. Promotes neurogenesis by maintaining sympathetic neuroblasts within the cell cycle. Involved in chondrocyte differentiation via interaction with SOX9: SOX9-binding competes with the binding sites of TCF/LEF within CTNNB1, thereby inhibiting the Wnt signaling. Acts as a positive regulator of odontoblast differentiation during mesenchymal tooth germ formation, via promoting the transcription of differentiation factors such as LEF1, BMP2 and BMP4. Activity is repressed in a MSX1-mediated manner at the bell stage of mesenchymal tooth germ formation which prevents premature differentiation of odontoblasts. This chain is Catenin beta-1, found in Mus musculus (Mouse).